The chain runs to 357 residues: Elongation factor Ts (357 aa).

An involved in Mg(2+) ion dislocation from EF-Tu region spans residues 82 to 85 (TDFV).

The protein belongs to the EF-Ts family.

It is found in the cytoplasm. Associates with the EF-Tu.GDP complex and induces the exchange of GDP to GTP. It remains bound to the aminoacyl-tRNA.EF-Tu.GTP complex up to the GTP hydrolysis stage on the ribosome. This Campylobacter jejuni subsp. doylei (strain ATCC BAA-1458 / RM4099 / 269.97) protein is Elongation factor Ts.